Reading from the N-terminus, the 645-residue chain is Envelope glycoprotein (645 aa).

An N-terminal signal peptide occupies residues 1-33 (MESPAFSKPLKDKINPWGPLIIMGILVRAGASV). The receptor-binding domain (RBD) stretch occupies residues 32-237 (SVQRDSPHQV…QVLNVGPRVP (206 aa)). Topologically, residues 34-585 (QRDSPHQVFN…FNRSPWFTTL (552 aa)) are extracellular. N-linked (GlcNAc...) asparagine; by host glycosylation is found at Asn43 and Asn58. 2 disulfide bridges follow: Cys113–Cys130 and Cys122–Cys135. The segment at 259 to 286 (PRPPRPPPSGAASMVPGAPPPSQQPGTG) is disordered. A glycan (N-linked (GlcNAc...) asparagine; by host) is linked at Asn301. 6 disulfide bridges follow: Cys311/Cys314, Cys311/Cys538, Cys341/Cys395, Cys360/Cys372, Cys402/Cys415, and Cys530/Cys537. A CXXC motif is present at residues 311–314 (CWLC). 2 N-linked (GlcNAc...) asparagine; by host glycosylation sites follow: Asn333 and Asn340. N-linked (GlcNAc...) asparagine; by host glycans are attached at residues Asn373 and Asn409. The segment at 447–467 (VSLTLALLLGGLTMGGIAAGV) is fusion peptide. Positions 490 to 510 (DLGALEKSVSALEKSLTSLSE) form a coiled coil. Positions 513–529 (LQNRRGLDLLFLKEGGL) are immunosuppression. Residues 530-538 (CAALKEECC) carry the CX6CC motif. The chain crosses the membrane as a helical span at residues 586–606 (ISTIMGPLIVLLLILLFGPCI). The S-palmitoyl cysteine; by host moiety is linked to residue Cys605. Residues 607 to 640 (LNRLVQFVKDRISVVQALVLTQQYHQLKSIDPEE) are Cytoplasmic-facing. The YXXL motif; contains endocytosis signal signature appears at 630–633 (YHQL).

As to quaternary structure, the mature envelope protein (Env) consists of a trimer of SU-TM heterodimers attached by a labile interchain disulfide bond. The activated Env consists of SU monomers and TM trimers. Specific enzymatic cleavages in vivo yield mature proteins. Envelope glycoproteins are synthesized as an inactive precursor that is N-glycosylated and processed likely by host cell furin or by a furin-like protease in the Golgi to yield the mature SU and TM proteins. The cleavage site between SU and TM requires the minimal sequence [KR]-X-[KR]-R. The R-peptide is released from the C-terminus of the cytoplasmic tail of the TM protein upon particle formation as a result of proteolytic cleavage by the viral protease. Cleavage of this peptide is required for TM to become fusogenic. In terms of processing, the CXXC motif is highly conserved across a broad range of retroviral envelope proteins. It is thought to participate in the formation of a labile disulfide bond possibly with the CX6CC motif present in the transmembrane protein. Isomerization of the intersubunit disulfide bond to an SU intrachain disulfide bond is thought to occur upon receptor recognition in order to allow membrane fusion. Post-translationally, the transmembrane protein is palmitoylated. The R-peptide is palmitoylated.

It is found in the virion membrane. Its subcellular location is the host cell membrane. Functionally, the surface protein (SU) attaches the virus to the host cell by binding to its receptor. This interaction activates a thiol in a CXXC motif of the C-terminal domain, where the other Cys residue participates in the formation of the intersubunit disulfide. The activated thiol will attack the disulfide and cause its isomerization into a disulfide isomer within the motif. This leads to SU displacement and TM refolding, and is thought to activate its fusogenic potential by unmasking its fusion peptide. Fusion occurs at the host cell plasma membrane. In terms of biological role, the transmembrane protein (TM) acts as a class I viral fusion protein. Under the current model, the protein has at least 3 conformational states: pre-fusion native state, pre-hairpin intermediate state, and post-fusion hairpin state. During viral and target cell membrane fusion, the coiled coil regions (heptad repeats) assume a trimer-of-hairpins structure, positioning the fusion peptide in close proximity to the C-terminal region of the ectodomain. The formation of this structure appears to drive apposition and subsequent fusion of viral and target cell membranes. Membranes fusion leads to delivery of the nucleocapsid into the cytoplasm. This chain is Envelope glycoprotein (env), found in Xenotropic MuLV-related virus (isolate VP42) (XMRV).